A 402-amino-acid chain; its full sequence is MAKRSLSNLSVEDLCGKRVLVRVDFNVPLNEEGSITDDTRIRAALPTIQHLIEKEARVILSAHFGRPKGKVNEDMRLTPVSQRLSELLGKTVVKTESCIGPDAEKKVHEMSNGDVVLLENVRFIGEEEKNDSEFAKKLASLAEVYVNDAFGAAHRAHASTEGVTNYLSPSVAGYLMEKELKYLQGAIDSPQRPLAAIVGGSKVSSKIGVLESLIDKCDKVLIGGGMIFTFYKARGLSVGKSLVEDDKLDLARALEKKAKEKGVQLLLPSDVVLADNFSPDASSQMVQIDSIPEGWMGLDIGKESVKLFQDALADCKTVIWNGPMGVFEFDKFANGTNSISTTLAELSAKGCCTIIGGGDSVAAVEKAGLASKMSHISTGGGASLELLEGKVLPGVAALDDEI.

Substrate-binding positions include aspartate 24–asparagine 26, arginine 40, histidine 63–arginine 66, arginine 122, and arginine 155. ATP contacts are provided by residues lysine 206, glycine 297, glutamate 328, and glycine 357–serine 360.

It belongs to the phosphoglycerate kinase family. Monomer.

The protein localises to the cytoplasm. The enzyme catalyses (2R)-3-phosphoglycerate + ATP = (2R)-3-phospho-glyceroyl phosphate + ADP. Its pathway is carbohydrate degradation; glycolysis; pyruvate from D-glyceraldehyde 3-phosphate: step 2/5. The protein is Phosphoglycerate kinase of Prochlorococcus marinus (strain SARG / CCMP1375 / SS120).